Reading from the N-terminus, the 136-residue chain is Holo-[acyl-carrier-protein] synthase (136 aa).

Residues D7 and E53 each contribute to the Mg(2+) site.

This sequence belongs to the P-Pant transferase superfamily. AcpS family. The cofactor is Mg(2+).

Its subcellular location is the cytoplasm. The enzyme catalyses apo-[ACP] + CoA = holo-[ACP] + adenosine 3',5'-bisphosphate + H(+). Transfers the 4'-phosphopantetheine moiety from coenzyme A to a Ser of acyl-carrier-protein. The polypeptide is Holo-[acyl-carrier-protein] synthase (Roseiflexus castenholzii (strain DSM 13941 / HLO8)).